The following is a 346-amino-acid chain: dTDP-glucose 4,6-dehydratase (346 aa).

Residues 17-18, 38-41, 64-65, 86-90, and Thr-105 each bind NAD(+); these read FI, DKLT, DI, and LAAES. Position 90 (Ser-90) interacts with substrate. Residue Thr-139 participates in substrate binding. The active-site Proton donor is the Asp-140. Catalysis depends on proton acceptor residues Glu-141 and Tyr-165. NAD(+) is bound at residue 165–169; that stretch reads YSASK. Asn-194 serves as a coordination point for substrate. Asn-195 is an NAD(+) binding site. Substrate contacts are provided by residues 204-205, 220-222, Arg-229, Asn-264, and 298-302; these read KL, PVY, and DRPGH.

It belongs to the NAD(P)-dependent epimerase/dehydratase family. dTDP-glucose dehydratase subfamily. As to quaternary structure, homodimer. NAD(+) serves as cofactor.

The catalysed reaction is dTDP-alpha-D-glucose = dTDP-4-dehydro-6-deoxy-alpha-D-glucose + H2O. The protein operates within carbohydrate biosynthesis; dTDP-L-rhamnose biosynthesis. It participates in bacterial outer membrane biogenesis; LPS O-antigen biosynthesis. Catalyzes the dehydration of dTDP-D-glucose to form dTDP-6-deoxy-D-xylo-4-hexulose via a three-step process involving oxidation, dehydration and reduction. The sequence is that of dTDP-glucose 4,6-dehydratase from Neisseria gonorrhoeae.